The chain runs to 251 residues: Zinc import ATP-binding protein ZnuC (251 aa).

The ABC transporter domain occupies 5–220 (VSLENVSVSF…PEFISMFGPR (216 aa)). 37–44 (GPNGAGKS) is a binding site for ATP.

It belongs to the ABC transporter superfamily. Zinc importer (TC 3.A.1.15.5) family. As to quaternary structure, the complex is composed of two ATP-binding proteins (ZnuC), two transmembrane proteins (ZnuB) and a solute-binding protein (ZnuA).

It localises to the cell inner membrane. The catalysed reaction is Zn(2+)(out) + ATP(in) + H2O(in) = Zn(2+)(in) + ADP(in) + phosphate(in) + H(+)(in). Part of the ABC transporter complex ZnuABC involved in zinc import. Responsible for energy coupling to the transport system. The polypeptide is Zinc import ATP-binding protein ZnuC (Escherichia coli O157:H7).